The following is a 123-amino-acid chain: Ribonuclease P protein component 1 (123 aa).

The disordered stretch occupies residues 73-93 (PDNGVGTAFKPAGGETRQTTG).

It belongs to the eukaryotic/archaeal RNase P protein component 1 family. As to quaternary structure, consists of a catalytic RNA component and at least 4-5 protein subunits.

It is found in the cytoplasm. The enzyme catalyses Endonucleolytic cleavage of RNA, removing 5'-extranucleotides from tRNA precursor.. Part of ribonuclease P, a protein complex that generates mature tRNA molecules by cleaving their 5'-ends. This is Ribonuclease P protein component 1 from Halobacterium salinarum (strain ATCC 29341 / DSM 671 / R1).